Consider the following 1166-residue polypeptide: Myosin-1 (1166 aa).

The span at 1–13 shows a compositional bias: polar residues; that stretch reads MSQKVTPFMQSLK. Residues 1 to 71 are disordered; sequence MSQKVTPFMQ…AGDSEDSPYS (71 aa). Serine 14 carries the post-translational modification Phosphoserine. Residues 32–45 show a composition bias toward polar residues; it reads NSSGASVRLTNSNV. One can recognise a Myosin N-terminal SH3-like domain in the interval 112-161; it reads KKILQSWIQLPNGNWELGKILSTSGEESVISLPEGKVIKVISETLVPANP. In terms of domain architecture, Myosin motor spans 165–837; sequence DGVDDLMQLS…QIGVLEDTRN (673 aa). ATP-binding positions include 256–263 and 304–312; these read GESGAGKT and NDNSSRFGK. Actin-binding stretches follow at residues 589-623 and 717-739; these read LFEK…KQHL and LFQL…KPNN. IQ domains are found at residues 839-868, 862-891, 888-917, and 911-940; these read TLHG…GISI, LKRG…RHKA, RHKA…ASVV, and IADA…LKSG. Positions 955-1005 form a coiled coil; the sequence is SVLSELQRRVLKAEAALREKEEENDILQQRLQQYENRWSEYETKMKSMEEI. Positions 1030 to 1065 are disordered; that stretch reads ARNSDASVNASDATDWDSSSNQFRSQTSNGVGSRLQ. Polar residues predominate over residues 1032 to 1060; sequence NSDASVNASDATDWDSSSNQFRSQTSNGV.

The protein belongs to the TRAFAC class myosin-kinesin ATPase superfamily. Myosin family. Plant myosin class VIII subfamily. In terms of assembly, homodimer.

The protein localises to the cell junction. It localises to the plasmodesma. Its subcellular location is the cytoplasm. It is found in the cytoskeleton. The protein resides in the phragmoplast. The protein localises to the endosome. It localises to the endoplasmic reticulum. In terms of biological role, myosin heavy chain that is required for the cell cycle-regulated transport of various organelles and proteins for their segregation. Functions by binding with its tail domain to receptor proteins on organelles and exerting force with its N-terminal motor domain against actin filaments, thereby transporting its cargo along polarized actin cables. Involved in endocytosis via its action in endosomal trafficking. This is Myosin-1 (VIII-1) from Arabidopsis thaliana (Mouse-ear cress).